A 666-amino-acid polypeptide reads, in one-letter code: Probable potassium transport system protein Kup (666 aa).

A run of 12 helical transmembrane segments spans residues 16 to 36 (GFII…LYTM), 58 to 78 (ISLI…LVAL), 99 to 119 (TPWL…DGAL), 141 to 161 (IFQN…LLFA), 167 to 187 (TGVI…FLGI), 221 to 241 (IFIL…YSDL), 253 to 273 (WPFV…WILA), 292 to 312 (FTMH…QALI), 343 to 363 (TYIP…VLLF), 373 to 393 (YGLA…FFLI), 402 to 422 (VLLM…ASAV), and 424 to 444 (FMHG…IMTI).

The protein belongs to the HAK/KUP transporter (TC 2.A.72) family.

The protein resides in the cell membrane. It carries out the reaction K(+)(in) + H(+)(in) = K(+)(out) + H(+)(out). In terms of biological role, transport of potassium into the cell. Likely operates as a K(+):H(+) symporter. The polypeptide is Probable potassium transport system protein Kup (Streptococcus agalactiae serotype Ia (strain ATCC 27591 / A909 / CDC SS700)).